The following is a 337-amino-acid chain: Probable allantoicase 1 (337 aa).

It belongs to the allantoicase family.

It catalyses the reaction allantoate + H2O = (S)-ureidoglycolate + urea. It participates in nitrogen metabolism; (S)-allantoin degradation; (S)-ureidoglycolate from allantoate (aminidohydrolase route): step 1/1. In Burkholderia mallei (strain ATCC 23344), this protein is Probable allantoicase 1.